The chain runs to 543 residues: ATP synthase subunit alpha (543 aa).

174-181 (GDRQTGKT) is an ATP binding site.

It belongs to the ATPase alpha/beta chains family. F-type ATPases have 2 components, CF(1) - the catalytic core - and CF(0) - the membrane proton channel. CF(1) has five subunits: alpha(3), beta(3), gamma(1), delta(1), epsilon(1). CF(0) has three main subunits: a(1), b(2) and c(9-12). The alpha and beta chains form an alternating ring which encloses part of the gamma chain. CF(1) is attached to CF(0) by a central stalk formed by the gamma and epsilon chains, while a peripheral stalk is formed by the delta and b chains.

It localises to the cell membrane. It catalyses the reaction ATP + H2O + 4 H(+)(in) = ADP + phosphate + 5 H(+)(out). Functionally, produces ATP from ADP in the presence of a proton gradient across the membrane. The alpha chain is a regulatory subunit. The chain is ATP synthase subunit alpha from Bifidobacterium longum subsp. infantis (strain ATCC 15697 / DSM 20088 / JCM 1222 / NCTC 11817 / S12).